The following is a 300-amino-acid chain: 33 kDa chaperonin (300 aa).

2 disulfides stabilise this stretch: Cys235-Cys237 and Cys269-Cys272.

Belongs to the HSP33 family. In terms of processing, under oxidizing conditions two disulfide bonds are formed involving the reactive cysteines. Under reducing conditions zinc is bound to the reactive cysteines and the protein is inactive.

It localises to the cytoplasm. Functionally, redox regulated molecular chaperone. Protects both thermally unfolding and oxidatively damaged proteins from irreversible aggregation. Plays an important role in the bacterial defense system toward oxidative stress. This chain is 33 kDa chaperonin, found in Pseudomonas savastanoi pv. phaseolicola (strain 1448A / Race 6) (Pseudomonas syringae pv. phaseolicola (strain 1448A / Race 6)).